A 357-amino-acid polypeptide reads, in one-letter code: 3-isopropylmalate dehydrogenase (357 aa).

The substrate site is built by Arg-99, Arg-109, Arg-133, and Asp-223. 3 residues coordinate Mg(2+): Asp-223, Asp-247, and Asp-251. 283–295 provides a ligand contact to NAD(+); sequence GSAPDIAGEQRAD.

The protein belongs to the isocitrate and isopropylmalate dehydrogenases family. LeuB type 2 subfamily. Homodimer. Mg(2+) serves as cofactor. Mn(2+) is required as a cofactor.

It localises to the cytoplasm. The enzyme catalyses (2R,3S)-3-isopropylmalate + NAD(+) = 4-methyl-2-oxopentanoate + CO2 + NADH. Its pathway is amino-acid biosynthesis; L-leucine biosynthesis; L-leucine from 3-methyl-2-oxobutanoate: step 3/4. Functionally, catalyzes the oxidation of 3-carboxy-2-hydroxy-4-methylpentanoate (3-isopropylmalate) to 3-carboxy-4-methyl-2-oxopentanoate. The product decarboxylates to 4-methyl-2 oxopentanoate. In Leifsonia xyli subsp. xyli (strain CTCB07), this protein is 3-isopropylmalate dehydrogenase.